The sequence spans 711 residues: Polyribonucleotide nucleotidyltransferase (711 aa).

Residues D494 and D500 each contribute to the Mg(2+) site. The KH domain maps to 560-620 (PKIEIFGVDP…INVENAKSDI (61 aa)). In terms of domain architecture, S1 motif spans 651–710 (GEEFDGVVKKIMDFGAFISLKDGIDGLLHVSKIKTQLSEGDTLRVKVEEIKRGKISLELC).

Belongs to the polyribonucleotide nucleotidyltransferase family. Mg(2+) serves as cofactor.

The protein resides in the cytoplasm. The enzyme catalyses RNA(n+1) + phosphate = RNA(n) + a ribonucleoside 5'-diphosphate. Functionally, involved in mRNA degradation. Catalyzes the phosphorolysis of single-stranded polyribonucleotides processively in the 3'- to 5'-direction. The sequence is that of Polyribonucleotide nucleotidyltransferase from Campylobacter hominis (strain ATCC BAA-381 / DSM 21671 / CCUG 45161 / LMG 19568 / NCTC 13146 / CH001A).